Here is a 764-residue protein sequence, read N- to C-terminus: MYGFGRGNMFRNRSTRYRRRPRYRAENYHSYMLDLLENMNEEFGRNWWGTPESHQPDSGPSSLQVESVELYTRDNAREHNTFMYDLVDGTKPVLILRRGQPFSIAIRFKRNYNPQQDRLKLEIGFGQQPLITKGTLIMLPVSGSDTFTKDKTQWDVRLRQHDGAVITLEIQIPAAVAVGVWKMKIVSQLTSEEQPNVSAVTHECKNKTYILFNPWCKQDSVYMEDEQWRKEYVLSDVGKIFTGSFKQPVGRRWIFGQFTDSVLPACMLILERSGLDYTARSNPIKVVRAISAMVNNIDDEGVLEGRWQEPYDDGVAPWMWTGSSAILEKYLKTRGVPVKYGQCWVFAGVANTVSRALGIPSRTVTNYDSAHDTDDTLTIDKWFDKNGDKIEDATSDSIWNFHVWNDCWMARPDLPTGYGGWQAYDSTPQETSEGVYQTGPASVLAVQRGEIGYMFDSPFVFSEVNADVVHWQEDDSSETGYKKLKIDSYRVGRLLLTKKIGVDDDFGDADAEDITDQYKNKEGTDEERMSVLNAARSSGFNYAFNLPSPEKEDVYFNLLDIEKIKIGQPFHVTVNIENQSSETRRVSAVLSASSIYYTGITGRKIKRENGNFSLQPHQKEVLSIEVTPDEYLEKLVDYAMIKLYAIATVKETQQTWSEEDDFMVEKPNLELEIRGNLQVGTAFVLAISLTNPLKRVLDNCFFTIEAPGVTGAFRVTNRDIQPEEVAVHTVRLIPQKPGPRKIVATFSSRQLIQVVGSKQVEVLD.

Catalysis depends on residues cysteine 343, histidine 402, and aspartate 425. Ca(2+)-binding residues include asparagine 465, aspartate 467, glutamate 522, and glutamate 527.

It belongs to the transglutaminase superfamily. Transglutaminase family. Requires Ca(2+) as cofactor. In terms of tissue distribution, mainly expressed in hemocytes, hepatopancreas, and gastric tissues. On the other hand nothing was detected in the heart, intestine and muscle.

The protein resides in the membrane. The enzyme catalyses L-glutaminyl-[protein] + L-lysyl-[protein] = [protein]-L-lysyl-N(6)-5-L-glutamyl-[protein] + NH4(+). Functionally, catalyzes the cross-linking of proteins and the conjugation of polyamines to proteins. The sequence is that of Hemocyte protein-glutamine gamma-glutamyltransferase from Tachypleus tridentatus (Japanese horseshoe crab).